Consider the following 1146-residue polypeptide: Elicitor of plant defense protein 1 (1146 aa).

Disordered stretches follow at residues 25 to 75 (DPLP…RLSN) and 156 to 226 (ARPP…PRQG). The segment covering 164 to 177 (RAERIKAEDSDQSG) has biased composition (basic and acidic residues). The uDENN domain occupies 246 to 500 (PLNTDPNMHP…NLCTEAFSPL (255 aa)). In terms of domain architecture, cDENN spans 522–656 (VNEIPGSRTI…HRRKLHALLQ (135 aa)). The region spanning 658–1016 (AAPAKLRYGV…ERETKPGTTA (359 aa)) is the dDENN domain. Residues 730–806 (LHSKVDPNKP…RRSSSFGVDK (77 aa)) form a disordered region. A compositionally biased stretch (basic and acidic residues) spans 732–743 (SKVDPNKPDRPG). The span at 744–760 (TSKSTRTSPPSSVSPVS) shows a compositional bias: low complexity. A compositionally biased stretch (polar residues) spans 769-783 (TPVSRSDSGFALTST). Basic and acidic residues predominate over residues 784-797 (LREKRSRNFDEKTR). The Phorbol-ester/DAG-type zinc finger occupies 883 to 931 (GHCFNWEEGALSSSCSVCDDRAEGDGIYKCSGCSAFAHGRCLGCVSLAC). The tract at residues 1121–1146 (PRPEQRGTRGLVRKQVPSMLGTSPTN) is disordered.

This sequence belongs to the EPD1 elicitor family. Interacts with host cotton EIR5A (AC A0A5J5T2N2) and EIR5D (AC A0A5J5NT52) and host N.benthamiana EIR (AC P0DXJ0).

It is found in the secreted. The protein resides in the host cell. Its function is as follows. Acts as an elicitor that triggers defense responses in both Nicotiana benthamiana and cotton plants. Triggers the accumulation of reactive oxygen species (ROS) and the activation of cell death in cotton plants. Induces significantly enhanced resistance of Nicotiana benthamiana to both the broad-host-range filamentous pathogen Botrytis cinerea and the semibiotrophic pathogen Phytophthora capsici. Stimulates the expression of EIR5A (AC A0A5J5T2N2) and EIR5D (AC A0A5J5NT52) in cotton plants and recognition of EPD1 potentiates EIRs to enhance cotton PAMP-triggered immunity (PTI). The sequence is that of Elicitor of plant defense protein 1 from Verticillium dahliae (strain VdLs.17 / ATCC MYA-4575 / FGSC 10137) (Verticillium wilt).